The chain runs to 182 residues: UPF0397 protein VS_II0189 (182 aa).

The next 5 membrane-spanning stretches (helical) occupy residues 8–28 (VVVI…MFGV), 41–61 (AVLA…VGFI), 72–92 (WGVW…IGLF), 110–130 (FALF…SSAF), and 146–166 (QLSI…FLIL).

Belongs to the UPF0397 family.

It is found in the cell membrane. This is UPF0397 protein VS_II0189 from Vibrio atlanticus (strain LGP32) (Vibrio splendidus (strain Mel32)).